The chain runs to 385 residues: Aspartate/prephenate aminotransferase (385 aa).

Positions 39, 125, and 175 each coordinate L-aspartate. An N6-(pyridoxal phosphate)lysine modification is found at lysine 234. L-aspartate is bound at residue arginine 361.

It belongs to the class-I pyridoxal-phosphate-dependent aminotransferase family. Homodimer. Pyridoxal 5'-phosphate is required as a cofactor.

It is found in the cytoplasm. The catalysed reaction is L-aspartate + 2-oxoglutarate = oxaloacetate + L-glutamate. It carries out the reaction L-arogenate + oxaloacetate = prephenate + L-aspartate. Functionally, catalyzes the reversible conversion of aspartate and 2-oxoglutarate to glutamate and oxaloacetate. Can also transaminate prephenate in the presence of aspartate. This Thermus thermophilus (strain ATCC 27634 / DSM 579 / HB8) protein is Aspartate/prephenate aminotransferase (aspC).